The following is a 135-amino-acid chain: MNIKNQKPKGKMVLRTLAMPADTNANGDIFGGWIMSQMDIGGAILAKEIARGRVVTVSVNGMTFLKSVSVGDVVSCYAHCIRTGNTSITIKIEVWIKKVSSEPLGKFYCTTEAIFVYVAVDEFGQPKTLLPFSII.

Residues 8 to 123 (PKGKMVLRTL…IFVYVAVDEF (116 aa)) form the HotDog ACOT-type domain.

The protein belongs to the acyl coenzyme A hydrolase family.

This is an uncharacterized protein from Buchnera aphidicola subsp. Baizongia pistaciae (strain Bp).